The sequence spans 481 residues: MKVRFLQISDLHFQFQNYDTIVMRDKLLDFIEVLRRESDFDFLLLTGDIAHKGDVYNEDVKEYLNGIIKSMGLSKNNVHLVPGNHDISRDMTRTLLIDSIMKSPNPSEMLDKLDQKATNILVEGQRKFFDFYEDFMGVKYPEEDLHFLYQSEKYNVLSINTCLLSDKKGEEGTLLTAQMKLYKAIRKMNKEKNKGKVLNIAIGHHTLGCIESSERESIKAHFDDYFIDLYLAGHVHDSSFNITANTNENPFLELVSGAIIKDEYATPEFISVDVNLDNGETEVTYYIWNTEYKYWSKNNQGGRRLQEGKLNYKINRLESLIEKEIEDNDDKIDEDEFKSFIIDFHEYRESYKTFTSNFDNQIGLDKKFYDMKSGETFKRKFDSYSEYFGVINHIMDSTSYVSADKKELIAETIVDKYLEFHNQYNNGDEIFVKIVNEIYLECHSVLPYSKALTKKYIKILTCWCIYECEIFNDNKRSVKND.

Belongs to the metallophosphoesterase superfamily.

This is an uncharacterized protein from Bacillus subtilis (strain 168).